The chain runs to 91 residues: Small integral membrane protein 13 (91 aa).

A helical membrane pass occupies residues 10 to 30 (LVFVATLLIVLLLMVCGWYFV). The tract at residues 47-91 (DTGSQEGDHEPSGSETEEDTSSSPHRIRSARQRRAPADEGHRPLT) is disordered. Phosphoserine occurs at positions 58 and 60. Thr62 carries the phosphothreonine modification. Residue Ser69 is modified to Phosphoserine. The segment covering 71–80 (HRIRSARQRR) has biased composition (basic residues). Residues 81 to 91 (APADEGHRPLT) show a composition bias toward basic and acidic residues.

The protein belongs to the SMIM13 family.

The protein localises to the membrane. The protein is Small integral membrane protein 13 (SMIM13) of Homo sapiens (Human).